The following is a 524-amino-acid chain: Acetyl-CoA decarbonylase/synthase complex subunit beta (524 aa).

Residues C212, C215, C301, and C303 each coordinate [Ni-Fe-S] cluster. The disordered stretch occupies residues 436–466 (WVEEEEEEAEEVAEEAAAEAAPAAQPAQAAQ). A compositionally biased stretch (acidic residues) spans 437 to 452 (VEEEEEEAEEVAEEAA). Over residues 453–466 (AEAAPAAQPAQAAQ) the composition is skewed to low complexity.

It belongs to the CdhC family. Monomer. The ACDS complex is made up of alpha, epsilon, beta, gamma and delta chains with a probable stoichiometry of (alpha(2)epsilon(2))(4)-beta(8)-(gamma(1)delta(1))(8). [Ni-Fe-S] cluster is required as a cofactor.

It catalyses the reaction Co(I)-[corrinoid Fe-S protein] + acetyl-CoA + H(+) = methyl-Co(III)-[corrinoid Fe-S protein] + CO + CoA. In terms of biological role, part of a complex that catalyzes the reversible cleavage of acetyl-CoA, allowing autotrophic growth from CO(2). The alpha-epsilon complex generates CO from CO(2), while the beta subunit (this protein) combines the CO with CoA and a methyl group to form acetyl-CoA. The methyl group, which is incorporated into acetyl-CoA, is transferred to the beta subunit by a corrinoid iron-sulfur protein (the gamma-delta complex). This chain is Acetyl-CoA decarbonylase/synthase complex subunit beta, found in Archaeoglobus fulgidus (strain ATCC 49558 / DSM 4304 / JCM 9628 / NBRC 100126 / VC-16).